Consider the following 335-residue polypeptide: Glucokinase (335 aa).

11-16 lines the ATP pocket; that stretch reads ADIGGT.

It belongs to the bacterial glucokinase family.

The protein localises to the cytoplasm. The catalysed reaction is D-glucose + ATP = D-glucose 6-phosphate + ADP + H(+). This Stenotrophomonas maltophilia (strain R551-3) protein is Glucokinase.